A 129-amino-acid polypeptide reads, in one-letter code: Fluoride-specific ion channel FluC (129 aa).

3 helical membrane-spanning segments follow: residues Trp20–Ala40, Leu67–Ile87, and Ile96–Leu116. The Na(+) site is built by Gly75 and Thr78.

Belongs to the fluoride channel Fluc/FEX (TC 1.A.43) family.

It localises to the cell inner membrane. It carries out the reaction fluoride(in) = fluoride(out). Na(+) is not transported, but it plays an essential structural role and its presence is essential for fluoride channel function. Its function is as follows. Fluoride-specific ion channel. Important for reducing fluoride concentration in the cell, thus reducing its toxicity. The sequence is that of Fluoride-specific ion channel FluC from Desulfovibrio desulfuricans (strain ATCC 27774 / DSM 6949 / MB).